The primary structure comprises 134 residues: Large ribosomal subunit protein bL17 (134 aa).

Belongs to the bacterial ribosomal protein bL17 family. As to quaternary structure, part of the 50S ribosomal subunit. Contacts protein L32.

This is Large ribosomal subunit protein bL17 from Thioalkalivibrio sulfidiphilus (strain HL-EbGR7).